A 379-amino-acid polypeptide reads, in one-letter code: Beta-1,3-N-acetylglucosaminyltransferase lunatic fringe (379 aa).

Residues 1–8 lie on the Cytoplasmic side of the membrane; the sequence is MLKRCGRR. A helical; Signal-anchor for type II membrane protein membrane pass occupies residues 9–29; it reads LLLALAGALLACLLVLTADPP. The Lumenal segment spans residues 30–379; that stretch reads PPPLPAERGR…TPWCPRTAIF (350 aa). The interval 86–107 is disordered; the sequence is RDAGPPPGAAPRPADGHPRPLA. Arg129 is a binding site for substrate. N-linked (GlcNAc...) asparagine glycosylation is present at Asn167. Cystine bridges form between Cys168-Cys179 and Cys197-Cys260. Asp201 is a substrate binding site. Residue Asp202 coordinates Mn(2+). The active site involves Asp290. Residue His314 participates in Mn(2+) binding. A disulfide bridge connects residues Cys364 and Cys373.

It belongs to the glycosyltransferase 31 family. It depends on Mn(2+) as a cofactor. The cofactor is Co(2+). Post-translationally, a soluble form may be derived from the membrane form by proteolytic processing.

The protein localises to the golgi apparatus. Its subcellular location is the golgi apparatus membrane. The enzyme catalyses 3-O-(alpha-L-fucosyl)-L-threonyl-[EGF-like domain protein] + UDP-N-acetyl-alpha-D-glucosamine = 3-O-(N-acetyl-beta-D-glucosaminyl-(1-&gt;3)-alpha-L-fucosyl)-L-threonyl-[EGF-like domain protein] + UDP + H(+). It catalyses the reaction 3-O-(alpha-L-fucosyl)-L-seryl-[EGF-like domain protein] + UDP-N-acetyl-alpha-D-glucosamine = 3-O-(N-acetyl-beta-D-glucosaminyl-(1-&gt;3)-alpha-L-fucosyl)-L-seryl-[EGF-like domain protein] + UDP + H(+). Its function is as follows. Glycosyltransferase that initiates the elongation of O-linked fucose residues attached to EGF-like repeats in the extracellular domain of Notch molecules. Modulates NOTCH1 activity by modifying O-fucose residues at specific EGF-like domains resulting in inhibition of NOTCH1 activation by JAG1 and enhancement of NOTCH1 activation by DLL1 via an increase in its binding to DLL1. Decreases the binding of JAG1 to NOTCH2 but not that of DLL1. Essential mediator of somite segmentation and patterning. The polypeptide is Beta-1,3-N-acetylglucosaminyltransferase lunatic fringe (Homo sapiens (Human)).